Here is a 749-residue protein sequence, read N- to C-terminus: MEAETGSSVETGKKANRGTRIALVVFVGGTLVLGTILFLVSQGLLSLQAKQEYCLKPECIEAAAAILSKVNLSVDPCDNFFRFACDGWISNNPIPEDMPSYGVYPWLRHNVDLKLKELLEKSISRRRDTEAIQKAKILYSSCMNEKAIEKADAKPLLHILRHSPFRWPVLESNIGPEGVWSERKFSLLQTLATFRGQYSNSVFIRLYVSPDDKASNEHILKLDQATLSLAVREDYLDNSTEAKSYRDALYKFMVDTAVLLGANSSRAEHDMKSVLRLEIKIAEIMIPHENRTSEAMYNKMNISELSAMIPQFDWLGYIKKVIDTRLYPHLKDISPSENVVVRVPQYFKDLFRILGSERKKTIANYLVWRMVYSRIPNLSRRFQYRWLEFSRVIQGTTTLLPQWDKCVNFIESALPYVVGKMFVDVYFQEDKKEMMEELVEGVRWAFIDMLEKENEWMDAGTKRKAKEKARAVLAKVGYPEFIMNDTHVNEDLKAIKFSEADYFGNVLQTRKYLAQSDFFWLRKAVPKTEWFTNPTTVNAFYSASTNQIRFPAGELQKPFFWGTEYPRSLSYGAIGVIVGHEFTHGFDNNGRKYDKNGNLDPWWSTESEEKFKEKTKCMINQYSNYYWKKAGLNVKGKRTLGENIADNGGLREAFRAYRKWINDRRQGLEEPLLPGITFTNNQLFFLSYAHVRCNSYRPEAAREQVQIGAHSPPQFRVNGAISNFEEFQKAFNCPPNSTMNRGMDSCRLW.

The Cytoplasmic segment spans residues 1–20 (MEAETGSSVETGKKANRGTR). A helical; Signal-anchor for type II membrane protein transmembrane segment spans residues 21 to 41 (IALVVFVGGTLVLGTILFLVS). Topologically, residues 42–641 (QGLLSLQAKQ…LNVKGKRTLG (600 aa)) are extracellular. The Peptidase M13 domain maps to 53 to 749 (YCLKPECIEA…NRGMDSCRLW (697 aa)). Residues Cys-54 and Cys-59 are joined by a disulfide bond. Asn-71, Asn-238, Asn-263, Asn-290, Asn-301, Asn-377, and Asn-484 each carry an N-linked (GlcNAc...) asparagine glycan. 4 cysteine pairs are disulfide-bonded: Cys-77–Cys-733, Cys-85–Cys-693, Cys-142–Cys-406, and Cys-617–Cys-746. His-580 provides a ligand contact to Zn(2+). Glu-581 is an active-site residue. Residues His-584 and Glu-642 each contribute to the Zn(2+) site. Catalysis depends on Asp-646, which acts as the Proton donor. Asn-736 is a glycosylation site (N-linked (GlcNAc...) asparagine).

Belongs to the peptidase M13 family. In terms of assembly, interacts with MEPE; the interaction is zinc-dependent (via ASARM motif). It depends on Zn(2+) as a cofactor. In terms of tissue distribution, specifically expressed in ovary. Expressed at low levels in kidney.

It is found in the cell membrane. Peptidase that cleaves SIBLING (small integrin-binding ligand, N-linked glycoprotein)-derived ASARM peptides, thus regulating their biological activity. Cleaves ASARM peptides between Ser and Glu or Asp residues. Regulates osteogenic cell differentiation and bone mineralization through the cleavage of the MEPE-derived ASARM peptide. Promotes dentin mineralization and renal phosphate reabsorption by cleaving DMP1- and MEPE-derived ASARM peptides. Inhibits the cleavage of MEPE by CTSB/cathepsin B thus preventing MEPE degradation. The sequence is that of Phosphate-regulating neutral endopeptidase PHEX (PHEX) from Homo sapiens (Human).